A 223-amino-acid polypeptide reads, in one-letter code: Ribonuclease 3 (223 aa).

Residues 3 to 125 enclose the RNase III domain; it reads LERLQKKLGY…IIAAIYLDAG (123 aa). Glu38 is a binding site for Mg(2+). Asp42 is an active-site residue. Positions 111 and 114 each coordinate Mg(2+). Glu114 is a catalytic residue. In terms of domain architecture, DRBM spans 152 to 222; that stretch reads DPKTRLQEFL…AEQVLAKLTT (71 aa).

The protein belongs to the ribonuclease III family. As to quaternary structure, homodimer. Mg(2+) is required as a cofactor.

The protein resides in the cytoplasm. It catalyses the reaction Endonucleolytic cleavage to 5'-phosphomonoester.. Functionally, digests double-stranded RNA. Involved in the processing of primary rRNA transcript to yield the immediate precursors to the large and small rRNAs (23S and 16S). Processes some mRNAs, and tRNAs when they are encoded in the rRNA operon. Processes pre-crRNA and tracrRNA of type II CRISPR loci if present in the organism. The sequence is that of Ribonuclease 3 from Actinobacillus pleuropneumoniae serotype 3 (strain JL03).